The following is a 293-amino-acid chain: Mimecan (293 aa).

The signal sequence occupies residues 1–19 (MKTLQATFFLVAFVPLVKP). Asparagine 60 carries an N-linked (GlcNAc...) asparagine glycan. LRR repeat units follow at residues 107-126 (EAVPPLPKETAYLYARFNKI), 127-150 (KRIAVSDFADITTLRRIDFSGNMI), 151-174 (EEIEDGAFSKLLLLEELSLAENRL), 175-194 (VKLPVLPPKLTTFNANQNRI), 195-220 (KSRGIKNNAFKKLTNLAYLYLGHNAL), 221-241 (ESVPLNLPESLRILHLQHNNI), and 242-272 (TTITDDTFCKSNNTRYIRTRMDEIRMEGNPI). Residues asparagine 240 and asparagine 253 are each glycosylated (N-linked (GlcNAc...) asparagine). An intrachain disulfide couples cysteine 250 to cysteine 283.

The protein belongs to the small leucine-rich proteoglycan (SLRP) family. SLRP class III subfamily. In terms of processing, contains keratan sulfate. Expressed in many tissues.

Its subcellular location is the secreted. It is found in the extracellular space. It localises to the extracellular matrix. Its function is as follows. Induces bone formation in conjunction with TGF-beta-1 or TGF-beta-2. This chain is Mimecan (OGN), found in Coturnix japonica (Japanese quail).